Here is a 394-residue protein sequence, read N- to C-terminus: D-aspartate oxidase (394 aa).

The FAD site is built by Ile19, Ala57, Ser58, and Gly62. A helical membrane pass occupies residues 190–210; sequence LIGHEPTAGVIVCVGLGALVL. Asn214 is a glycosylation site (N-linked (GlcNAc...) asparagine). FAD is bound by residues Arg342, Gly373, and Gln375.

The protein belongs to the DAMOX/DASOX family. It depends on FAD as a cofactor.

It localises to the membrane. It carries out the reaction D-aspartate + O2 + H2O = oxaloacetate + H2O2 + NH4(+). Its function is as follows. Selectively catalyzes the oxidative deamination of acidic amino acids. Protects the organism from the toxicity of D-amino acids. Enables the organism to utilize D-amino acids as a source of nutrients. Enables the organism to utilize D-aspartate and D-asparagine as a source of nitrogen. May play a role in its interaction with the host. The chain is D-aspartate oxidase from Cryptococcus neoformans var. grubii serotype A (strain H99 / ATCC 208821 / CBS 10515 / FGSC 9487) (Filobasidiella neoformans var. grubii).